The following is a 1388-amino-acid chain: DNA-directed RNA polymerase subunit beta (1388 aa).

This sequence belongs to the RNA polymerase beta chain family. As to quaternary structure, the RNAP catalytic core consists of 2 alpha, 1 beta, 1 beta' and 1 omega subunit. When a sigma factor is associated with the core the holoenzyme is formed, which can initiate transcription.

The enzyme catalyses RNA(n) + a ribonucleoside 5'-triphosphate = RNA(n+1) + diphosphate. In terms of biological role, DNA-dependent RNA polymerase catalyzes the transcription of DNA into RNA using the four ribonucleoside triphosphates as substrates. The protein is DNA-directed RNA polymerase subunit beta of Xylella fastidiosa (strain 9a5c).